Consider the following 86-residue polypeptide: uncharacterized protein (86 aa).

A helical membrane pass occupies residues 12–32 (IIFIFAIIIIVVLCVITYLYL).

The protein resides in the membrane. This is an uncharacterized protein from Escherichia coli (strain K12).